A 320-amino-acid chain; its full sequence is Zinc finger protein 330 (320 aa).

The interval 1 to 23 is disordered; sequence MPKKKTGARKKAENRREREKQLR. Residues 3 to 11 carry the Nuclear localization signal motif; it reads KKKTGARKK. Residues 10 to 22 show a composition bias toward basic and acidic residues; that stretch reads KKAENRREREKQL. 4 consecutive C4-type zinc fingers follow at residues 42–58, 67–104, 129–149, and 175–189; these read CDKCQRRQKNRAFCYFC, CAQCGKTKCMMKSSDCVIKHAGVYSTGLAMVGAICDFC, CVECERGVWDHGGRIFSCSFC, and CVSCNRLGQHSCLRC. Positions 206–320 are disordered; that stretch reads EKGKQPPCPK…GYAHYEEQEN (115 aa). Over residues 216–225 the composition is skewed to basic and acidic residues; that stretch reads CGHETQETKD. Residues 269 to 285 are compositionally biased toward acidic residues; sequence DEEEDEYEAEDDEEEED. S291 is modified (phosphoserine).

The protein belongs to the NOA36 family. In terms of tissue distribution, widely expressed. Higher expression seen in heart and skeletal muscle.

The protein localises to the nucleus. It is found in the nucleolus. It localises to the chromosome. Its subcellular location is the centromere. The sequence is that of Zinc finger protein 330 (ZNF330) from Homo sapiens (Human).